The following is a 153-amino-acid chain: SsrA-binding protein (153 aa).

Belongs to the SmpB family.

The protein resides in the cytoplasm. In terms of biological role, required for rescue of stalled ribosomes mediated by trans-translation. Binds to transfer-messenger RNA (tmRNA), required for stable association of tmRNA with ribosomes. tmRNA and SmpB together mimic tRNA shape, replacing the anticodon stem-loop with SmpB. tmRNA is encoded by the ssrA gene; the 2 termini fold to resemble tRNA(Ala) and it encodes a 'tag peptide', a short internal open reading frame. During trans-translation Ala-aminoacylated tmRNA acts like a tRNA, entering the A-site of stalled ribosomes, displacing the stalled mRNA. The ribosome then switches to translate the ORF on the tmRNA; the nascent peptide is terminated with the 'tag peptide' encoded by the tmRNA and targeted for degradation. The ribosome is freed to recommence translation, which seems to be the essential function of trans-translation. This Paramagnetospirillum magneticum (strain ATCC 700264 / AMB-1) (Magnetospirillum magneticum) protein is SsrA-binding protein.